A 239-amino-acid polypeptide reads, in one-letter code: Protein-S-isoprenylcysteine O-methyltransferase (239 aa).

Over 1–23 (MHQDFQEDEHEYPDIRRNPLHEV) the chain is Cytoplasmic. A helical transmembrane segment spans residues 24–44 (TMTSYILGILLGIFVGLFPQI). At 45–47 (RFK) the chain is on the lumenal side. A helical membrane pass occupies residues 48–68 (NFNLFIIALSLFHFLEYYITA). Residues 69–88 (KYNPLKVHSESFLLNNGKSY) are Cytoplasmic-facing. A helical transmembrane segment spans residues 89 to 109 (MAAHSFAILECLVESFLFPDL). Lysine 110 is a topological domain (lumenal). Residues 111–131 (IFSYSLATKLCTVLGCLLVIL) traverse the membrane as a helical segment. The Cytoplasmic portion of the chain corresponds to 132-175 (GQYTRTIAMHTAGHSFSHIVKTKKESDHVLVKTGVYSWSRHPSY). S-adenosyl-L-methionine contacts are provided by residues 159 to 162 (HVLV), tyrosine 167, and 172 to 175 (HPSY). Residues 176 to 206 (LGFFWWAIGTQLLLLNPLSLVIFIFVLWKFF) constitute an intramembrane region (helical). The Cytoplasmic segment spans residues 207–239 (SDRIRVEEKYLIEFFSAEYIEYKNKVGVGIPFI). Arginine 209 lines the substrate pocket. Glutamate 213 is an S-adenosyl-L-methionine binding site.

Belongs to the class VI-like SAM-binding methyltransferase superfamily. Isoprenylcysteine carboxyl methyltransferase family.

The protein resides in the endoplasmic reticulum membrane. The catalysed reaction is [protein]-C-terminal S-[(2E,6E)-farnesyl]-L-cysteine + S-adenosyl-L-methionine = [protein]-C-terminal S-[(2E,6E)-farnesyl]-L-cysteine methyl ester + S-adenosyl-L-homocysteine. Functionally, mediates C-terminal methylation of the isoprenylated C-terminal cysteine in A-factor mating pheromone and Ras proteins. Does not have a preference for the farnesyl or geranylgeranyl moieties in the model substrates N-acetyl-S-farnesyl-L-cysteine (AFC) and N-acetyl-S-geranylgeranyl-L-cysteine (AGGC) in vitro. This is Protein-S-isoprenylcysteine O-methyltransferase (STE14) from Saccharomyces cerevisiae (strain ATCC 204508 / S288c) (Baker's yeast).